A 292-amino-acid chain; its full sequence is Expansin-like protein 6 (292 aa).

An N-terminal signal peptide occupies residues M1–A24. Residues D25–L267 lie on the Extracellular side of the membrane. In terms of domain architecture, Expansin-like EG45 spans H47–N150. 2 disulfides stabilise this stretch: C50-C80 and C83-C145. Residue N92 is glycosylated (N-linked (GlcNAc...) asparagine). Residues P268 to F288 form a helical membrane-spanning segment. Residues S289–Y292 lie on the Cytoplasmic side of the membrane.

This sequence belongs to the expansin family. Expansin A subfamily.

It is found in the membrane. May serve to lubricate the movement of the cellulose microfibrils during cell growth and wall extension and/or may serve to maintain the fluid state of the slug cell wall. This is Expansin-like protein 6 (expl6) from Dictyostelium discoideum (Social amoeba).